Reading from the N-terminus, the 332-residue chain is tRNA uridine(34) hydroxylase (332 aa).

The region spanning serine 123–serine 217 is the Rhodanese domain. Residue cysteine 177 is the Cysteine persulfide intermediate of the active site. The interval serine 302–lysine 332 is disordered. The span at serine 310–lysine 319 shows a compositional bias: basic and acidic residues.

The protein belongs to the TrhO family.

The catalysed reaction is uridine(34) in tRNA + AH2 + O2 = 5-hydroxyuridine(34) in tRNA + A + H2O. Functionally, catalyzes oxygen-dependent 5-hydroxyuridine (ho5U) modification at position 34 in tRNAs. This Shewanella woodyi (strain ATCC 51908 / MS32) protein is tRNA uridine(34) hydroxylase.